Reading from the N-terminus, the 364-residue chain is ATP synthase gamma chain, chloroplastic (364 aa).

A chloroplast-targeting transit peptide spans 1-41; it reads MACSLSFSSSVSTFHLPTTTQSTQAPPNNATTLPTTNPIQC. Residues 17–36 are disordered; the sequence is PTTTQSTQAPPNNATTLPTT. Residues 25-36 show a composition bias toward low complexity; that stretch reads APPNNATTLPTT. C130 is an active-site residue. Cysteines 240 and 246 form a disulfide.

It belongs to the ATPase gamma chain family. F-type ATPases have 2 components, CF(1) - the catalytic core - and CF(0) - the membrane proton channel. CF(1) has five subunits: alpha(3), beta(3), gamma(1), delta(1), epsilon(1). CF(0) has four main subunits: a, b, b' and c. Disulfide bond; Cys-240 and Cys-246 are known to form a disulfide bridge in the dark which gives rise to an inactive enzyme. Activation can be brought about by a ferredoxin-dependent reduction of the disulfide bond in the light.

Its subcellular location is the plastid. The protein localises to the chloroplast thylakoid membrane. Its function is as follows. Produces ATP from ADP in the presence of a proton gradient across the membrane. The gamma chain is believed to be important in regulating ATPase activity and the flow of protons through the CF(0) complex. The chain is ATP synthase gamma chain, chloroplastic (ATPC) from Spinacia oleracea (Spinach).